The sequence spans 351 residues: Riboflavin-binding protein RibY (351 aa).

The N-terminal stretch at 1-19 is a signal peptide; it reads MMKLRVLTLGILIILLITA. A lipid anchor (N-palmitoyl cysteine) is attached at Cys-20. Cys-20 is lipidated: S-diacylglycerol cysteine.

The protein belongs to the NMT1 family. In terms of assembly, the complex is likely composed of an ATP-binding protein, a transmembrane protein (RibX) and a solute-binding protein (RibY).

It localises to the cell membrane. Functionally, part of an ABC transporter complex that transports riboflavin into the cell. Binds riboflavin. This is Riboflavin-binding protein RibY from Chloroflexus aurantiacus (strain ATCC 29366 / DSM 635 / J-10-fl).